The sequence spans 904 residues: MLIPSKLSRPVRLQNTVIRDRLLAKLASTANYRLTLVNCPAGYGKTTLVAQWAAGKSDLGWYSLDESDNQPERFASYLIAALQLASGGHCVKSEALSQKHQYASLSALFAQLFIELSDWHQPLYLVIDDYHLITNDVIHEAMRFFLRHQPENLTLILLSRTLPPLGIANLRVRDQLLEMGTQQLAFTHQEAKQFFDCRLVSPMESQDSSRLCDEVEGWATALQLIALSARQSNSSAQQSAKRLAGLNASHLSDYLVDEVLDHVDAEARAFLLRCSVLRSMNDALIVRLTGEDNGQQRLEELERQGLFIHRMDDSGEWFCFHPLFATFLRQRCQWELALELPGLHRAAAEGWLALGYPAEAIHHALAASDVSMLRDILLQHAWSLFHHSELALLEECLNALPYERLIQNPKLALLQAWLAQSQHRYSEVNTLLERAEQAMRDQKIEVDRTLEAEFDALRAQVAINAGKPEEAERLATEALKFLPLSSYYSRIVATSVTGEVHHCKGELARALPMMQQTEQMARRHQAYHYALWALLQQSEILIAQGFLQAAFETQDKAFELVREQHLEQLPMHEFLLRIRSQILWSWSRLDEAEDAAREGLKILANYQPQQQLQCIAMLAKCSLARGDLDNANAHMQRCEVLLHGTQYHRDWLTNADKPRVIHWQMTGDTTAAAQWLRQTEKPGMADNHFMQGQWRNIARVQIMLGQYEEAEVVLDELNENARRLRLVSDLNRNLLLSNQLYWQMERKSDAQKVLMEALSLASRTGFISHFVIEGEAMAQQLRQLIQLNTLPELENHRAQRILRDINQHHRHKFAHFDENFVDKLLTHPQVPELIRTSPLTQREWQVLGLIYSGYSNDQIAGELAVAATTIKTHIRNLYQKLGVAHRQEAVQQAQQLLKMMGYGA.

39-46 contacts ATP; that stretch reads CPAGYGKT. The HTH luxR-type domain occupies 832–897; sequence ELIRTSPLTQ…EAVQQAQQLL (66 aa). The H-T-H motif DNA-binding region spans 856-875; that stretch reads NDQIAGELAVAATTIKTHIR.

Belongs to the MalT family. Monomer in solution. Oligomerizes to an active state in the presence of the positive effectors ATP and maltotriose.

Activated by ATP and maltotriose, which are both required for DNA binding. In terms of biological role, positively regulates the transcription of the maltose regulon whose gene products are responsible for uptake and catabolism of malto-oligosaccharides. Specifically binds to the promoter region of its target genes, recognizing a short DNA motif called the MalT box. This chain is HTH-type transcriptional regulator MalT, found in Serratia proteamaculans (strain 568).